Reading from the N-terminus, the 256-residue chain is Undecaprenyl-diphosphatase 2 (256 aa).

Transmembrane regions (helical) follow at residues 1 to 21, 38 to 58, 70 to 90, 97 to 117, 134 to 154, 175 to 195, 208 to 228, and 236 to 256; these read MDIF…FLPI, ATAT…LAVL, LNLW…AFIF, LFNV…FLLL, VTYK…IPGT, AEFS…YDLL, ALAV…KLFI, and FVSF…IAYV.

The protein belongs to the UppP family.

The protein resides in the cell inner membrane. It catalyses the reaction di-trans,octa-cis-undecaprenyl diphosphate + H2O = di-trans,octa-cis-undecaprenyl phosphate + phosphate + H(+). Its function is as follows. Catalyzes the dephosphorylation of undecaprenyl diphosphate (UPP). Confers resistance to bacitracin. In Pseudoalteromonas translucida (strain TAC 125), this protein is Undecaprenyl-diphosphatase 2.